The primary structure comprises 63 residues: Large ribosomal subunit protein uL30 (63 aa).

Belongs to the universal ribosomal protein uL30 family. Part of the 50S ribosomal subunit.

The protein is Large ribosomal subunit protein uL30 of Natranaerobius thermophilus (strain ATCC BAA-1301 / DSM 18059 / JW/NM-WN-LF).